Reading from the N-terminus, the 150-residue chain is Transcriptional repressor NrdR (150 aa).

The segment at 3 to 34 (CPFCNFSDSKVVDSRPDKGGAAIRRRRECESC) is a zinc-finger region. In terms of domain architecture, ATP-cone spans 49–139 (PLVTKRDGRR…VYRSFKDINE (91 aa)).

The protein belongs to the NrdR family. Zn(2+) is required as a cofactor.

Functionally, negatively regulates transcription of bacterial ribonucleotide reductase nrd genes and operons by binding to NrdR-boxes. This chain is Transcriptional repressor NrdR, found in Citrifermentans bemidjiense (strain ATCC BAA-1014 / DSM 16622 / JCM 12645 / Bem) (Geobacter bemidjiensis).